Here is a 168-residue protein sequence, read N- to C-terminus: Photosystem I assembly protein Ycf3 (168 aa).

3 TPR repeats span residues 35–68, 72–105, and 120–153; these read AFAY…EIDP, SYIL…NPFL, and GEQA…TPGN.

The protein belongs to the Ycf3 family.

The protein localises to the plastid. Its subcellular location is the chloroplast thylakoid membrane. Functionally, essential for the assembly of the photosystem I (PSI) complex. May act as a chaperone-like factor to guide the assembly of the PSI subunits. This chain is Photosystem I assembly protein Ycf3, found in Morus indica (Mulberry).